Reading from the N-terminus, the 101-residue chain is Small ribosomal subunit protein uS14 (101 aa).

Belongs to the universal ribosomal protein uS14 family. Part of the 30S ribosomal subunit. Contacts proteins S3 and S10.

In terms of biological role, binds 16S rRNA, required for the assembly of 30S particles and may also be responsible for determining the conformation of the 16S rRNA at the A site. The polypeptide is Small ribosomal subunit protein uS14 (Ruegeria pomeroyi (strain ATCC 700808 / DSM 15171 / DSS-3) (Silicibacter pomeroyi)).